The chain runs to 267 residues: Diaminopimelate epimerase (267 aa).

Residues N15 and N66 each contribute to the substrate site. C75 acts as the Proton donor in catalysis. Residues G76–N77, N150, N183, and E201–R202 contribute to the substrate site. The active-site Proton acceptor is C210. Substrate is bound at residue G211–T212.

Belongs to the diaminopimelate epimerase family. In terms of assembly, homodimer.

The protein localises to the cytoplasm. The enzyme catalyses (2S,6S)-2,6-diaminopimelate = meso-2,6-diaminopimelate. Its pathway is amino-acid biosynthesis; L-lysine biosynthesis via DAP pathway; DL-2,6-diaminopimelate from LL-2,6-diaminopimelate: step 1/1. Its function is as follows. Catalyzes the stereoinversion of LL-2,6-diaminopimelate (L,L-DAP) to meso-diaminopimelate (meso-DAP), a precursor of L-lysine and an essential component of the bacterial peptidoglycan. This Bacteroides thetaiotaomicron (strain ATCC 29148 / DSM 2079 / JCM 5827 / CCUG 10774 / NCTC 10582 / VPI-5482 / E50) protein is Diaminopimelate epimerase.